Here is a 201-residue protein sequence, read N- to C-terminus: 3-isopropylmalate dehydratase small subunit (201 aa).

Belongs to the LeuD family. LeuD type 1 subfamily. As to quaternary structure, heterodimer of LeuC and LeuD.

It catalyses the reaction (2R,3S)-3-isopropylmalate = (2S)-2-isopropylmalate. It functions in the pathway amino-acid biosynthesis; L-leucine biosynthesis; L-leucine from 3-methyl-2-oxobutanoate: step 2/4. Functionally, catalyzes the isomerization between 2-isopropylmalate and 3-isopropylmalate, via the formation of 2-isopropylmaleate. The sequence is that of 3-isopropylmalate dehydratase small subunit from Shewanella denitrificans (strain OS217 / ATCC BAA-1090 / DSM 15013).